A 425-amino-acid chain; its full sequence is Glutamyl-tRNA reductase (425 aa).

Substrate contacts are provided by residues 47 to 50, serine 107, 112 to 114, and glutamine 118; these read TCNR and EDQ. The active-site Nucleophile is the cysteine 48. 187–192 is an NADP(+) binding site; the sequence is GAGHMA.

This sequence belongs to the glutamyl-tRNA reductase family. Homodimer.

The catalysed reaction is (S)-4-amino-5-oxopentanoate + tRNA(Glu) + NADP(+) = L-glutamyl-tRNA(Glu) + NADPH + H(+). The protein operates within porphyrin-containing compound metabolism; protoporphyrin-IX biosynthesis; 5-aminolevulinate from L-glutamyl-tRNA(Glu): step 1/2. Its pathway is porphyrin-containing compound metabolism; chlorophyll biosynthesis. In terms of biological role, catalyzes the NADPH-dependent reduction of glutamyl-tRNA(Glu) to glutamate 1-semialdehyde (GSA). This Roseiflexus castenholzii (strain DSM 13941 / HLO8) protein is Glutamyl-tRNA reductase.